The chain runs to 417 residues: Tyrosine--tRNA ligase (417 aa).

Position 39 (tyrosine 39) interacts with L-tyrosine. The short motif at cysteine 44–histidine 53 is the 'HIGH' region element. Tyrosine 176 and glutamine 180 together coordinate L-tyrosine. Residues lysine 236–threonine 240 carry the 'KMSKS' region motif. An ATP-binding site is contributed by lysine 239. In terms of domain architecture, S4 RNA-binding spans alanine 350 to alanine 417.

Belongs to the class-I aminoacyl-tRNA synthetase family. TyrS type 1 subfamily. Homodimer.

The protein localises to the cytoplasm. It catalyses the reaction tRNA(Tyr) + L-tyrosine + ATP = L-tyrosyl-tRNA(Tyr) + AMP + diphosphate + H(+). Its function is as follows. Catalyzes the attachment of tyrosine to tRNA(Tyr) in a two-step reaction: tyrosine is first activated by ATP to form Tyr-AMP and then transferred to the acceptor end of tRNA(Tyr). This Nitrobacter winogradskyi (strain ATCC 25391 / DSM 10237 / CIP 104748 / NCIMB 11846 / Nb-255) protein is Tyrosine--tRNA ligase.